The following is a 544-amino-acid chain: Chaperonin GroEL (544 aa).

ATP-binding positions include Thr29–Pro32, Asp86–Thr90, Gly413, Asn476–Ala478, and Asp492.

Belongs to the chaperonin (HSP60) family. As to quaternary structure, forms a cylinder of 14 subunits composed of two heptameric rings stacked back-to-back. Interacts with the co-chaperonin GroES.

Its subcellular location is the cytoplasm. The protein localises to the secreted. The enzyme catalyses ATP + H2O + a folded polypeptide = ADP + phosphate + an unfolded polypeptide.. In terms of biological role, together with its co-chaperonin GroES, plays an essential role in assisting protein folding. The GroEL-GroES system forms a nano-cage that allows encapsulation of the non-native substrate proteins and provides a physical environment optimized to promote and accelerate protein folding. The polypeptide is Chaperonin GroEL (Bacillus subtilis (strain 168)).